The sequence spans 400 residues: Acetylornithine aminotransferase (400 aa).

Pyridoxal 5'-phosphate-binding positions include 106 to 107 and phenylalanine 132; that span reads GA. N(2)-acetyl-L-ornithine is bound at residue arginine 135. 217–220 is a pyridoxal 5'-phosphate binding site; that stretch reads DEVQ. The residue at position 246 (lysine 246) is an N6-(pyridoxal phosphate)lysine. Position 274 (serine 274) interacts with N(2)-acetyl-L-ornithine. Threonine 275 provides a ligand contact to pyridoxal 5'-phosphate.

This sequence belongs to the class-III pyridoxal-phosphate-dependent aminotransferase family. ArgD subfamily. As to quaternary structure, homodimer. It depends on pyridoxal 5'-phosphate as a cofactor.

Its subcellular location is the cytoplasm. It catalyses the reaction N(2)-acetyl-L-ornithine + 2-oxoglutarate = N-acetyl-L-glutamate 5-semialdehyde + L-glutamate. It functions in the pathway amino-acid biosynthesis; L-arginine biosynthesis; N(2)-acetyl-L-ornithine from L-glutamate: step 4/4. The polypeptide is Acetylornithine aminotransferase (Streptomyces clavuligerus).